A 430-amino-acid polypeptide reads, in one-letter code: 3-oxo-tetronate kinase (430 aa).

ATP is bound by residues serine 268, 366–369, and glycine 410; that span reads GGET.

Belongs to the four-carbon acid sugar kinase family.

It carries out the reaction 3-dehydro-L-erythronate + ATP = 3-dehydro-4-O-phospho-L-erythronate + ADP + H(+). The catalysed reaction is 3-dehydro-D-erythronate + ATP = 3-dehydro-4-O-phospho-D-erythronate + ADP + H(+). In terms of biological role, catalyzes the ATP-dependent phosphorylation of 3-oxo-tetronate to 3-oxo-tetronate 4-phosphate. This is 3-oxo-tetronate kinase from Pseudomonas fluorescens (strain ATCC BAA-477 / NRRL B-23932 / Pf-5).